Here is a 318-residue protein sequence, read N- to C-terminus: Glycerol 2-dehydrogenase (NADP(+)) (318 aa).

The active-site Proton donor is the tyrosine 52. Histidine 115 provides a ligand contact to substrate. 217-277 (SPLGSQNQVP…SSTPSRIESN (61 aa)) is an NADP(+) binding site.

Belongs to the aldo/keto reductase family.

It carries out the reaction glycerol + NADP(+) = dihydroxyacetone + NADPH + H(+). In terms of biological role, glycerol oxidoreductase probably involved in glycerol synthesis. This chain is Glycerol 2-dehydrogenase (NADP(+)) (gld2), found in Hypocrea jecorina (Trichoderma reesei).